A 313-amino-acid chain; its full sequence is Adhesin MafA 1/2 (313 aa).

The N-terminal stretch at 1-14 (MKTLLLLIPLVLTA) is a signal peptide. C15 carries the N-palmitoyl cysteine lipid modification. A lipid anchor (S-diacylglycerol cysteine) is attached at C15. Over residues 282-298 (GDTTAQNRPDFKQNNGK) the composition is skewed to polar residues. The disordered stretch occupies residues 282 to 313 (GDTTAQNRPDFKQNNGKNPDVGNEVIRRRKGG).

This sequence belongs to the MafA family.

The protein resides in the cell outer membrane. The sequence is that of Adhesin MafA 1/2 (mafA1) from Neisseria meningitidis serogroup C (strain 053442).